A 114-amino-acid chain; its full sequence is Large ribosomal subunit protein uL18 (114 aa).

It belongs to the universal ribosomal protein uL18 family. Part of the 50S ribosomal subunit; part of the 5S rRNA/L5/L18/L25 subcomplex. Contacts the 5S and 23S rRNAs.

This is one of the proteins that bind and probably mediate the attachment of the 5S RNA into the large ribosomal subunit, where it forms part of the central protuberance. In Aster yellows phytoplasma, this protein is Large ribosomal subunit protein uL18.